The following is a 657-amino-acid chain: Autophagy-related protein 22 (657 aa).

Low complexity predominate over residues 1–15 (MAPNLQPQPQSQLQR). The disordered stretch occupies residues 1–78 (MAPNLQPQPQ…VVPRHFGHDA (78 aa)). The Cytoplasmic portion of the chain corresponds to 1–91 (MAPNLQPQPQ…SRRELLGWYA (91 aa)). Residues 26–40 (GLSNISKRSFRSCAT) show a composition bias toward polar residues. Residues 92 to 112 (YAFAAETYVICGIASFIPILL) form a helical membrane-spanning segment. The Vacuolar portion of the chain corresponds to 113–155 (ETLARENGVLVSDRKTPCGSSDSKNDGDGQCIVWVFGMEINTA). The helical transmembrane segment at 156–176 (SFAMYTFSVSVLVQALLVVSI) threads the bilayer. Residues 177–187 (SCAADHGNYRK) are Cytoplasmic-facing. A helical membrane pass occupies residues 188–208 (KLLLTFAWIGSFAVMSYIFIT). The Vacuolar segment spans residues 209-212 (KDNY). The chain crosses the membrane as a helical span at residues 213-233 (ILGALLTVISNTSFGASFVLL). Topologically, residues 234-317 (NSFLPLLVRY…ELELSTRISA (84 aa)) are cytoplasmic. A helical membrane pass occupies residues 318-338 (IGIGTGYIAALFLQCICIGVL). At 339–349 (ISLHNTTWGQR) the chain is on the vacuolar side. N-linked (GlcNAc...) asparagine glycosylation is present at asparagine 343. The helical transmembrane segment at 350-370 (VVLFMVGVWWTVFTIPAAMWL) threads the bilayer. Residues 371 to 384 (RPRPGPPLADNGRK) lie on the Cytoplasmic side of the membrane. The helical transmembrane segment at 385-405 (GIMAGLAYILYAWKSLFKTIQ) threads the bilayer. The Vacuolar segment spans residues 406-409 (QARR). Residues 410 to 430 (LLDIVLFLAGWFLLSDAIATT) traverse the membrane as a helical segment. At 431-446 (SSTAILFAKTQLHMKP) the chain is on the cytoplasmic side. A helical transmembrane segment spans residues 447-467 (WALGMINVISTTAGVFGAFGW). Residues 468–481 (SWVSRLFNLKAHQT) are Vacuolar-facing. Residues 482–502 (ILVCIALFELIPLYGLLGYLP) form a helical membrane-spanning segment. At 503-515 (FVKNWGVFGLQQP) the chain is on the cytoplasmic side. Residues 516–536 (WEMYPLAAVYGVVLGGLSGYC) form a helical membrane-spanning segment. Residues 537 to 554 (RSLYGELIPPGSEAAFYA) are Vacuolar-facing. A helical membrane pass occupies residues 555-575 (LYAITDKGSSVFGPTIVGAII). At 576 to 583 (DRTGTIRP) the chain is on the cytoplasmic side. A helical transmembrane segment spans residues 584–604 (AFWFLAVLVGFPAPLIWFIDV). At 605-657 (ERGRREGAKLAKSITDSIVQEEDESDDGAERRGMLSDYEREHGQSIDDERAGR) the chain is on the vacuolar side. The interval 615-657 (AKSITDSIVQEEDESDDGAERRGMLSDYEREHGQSIDDERAGR) is disordered. Positions 632–657 (GAERRGMLSDYEREHGQSIDDERAGR) are enriched in basic and acidic residues.

It belongs to the ATG22 family.

The protein resides in the vacuole membrane. Vacuolar effluxer which mediate the efflux of leucine and other amino acids resulting from autophagic degradation. The release of autophagic amino acids allows the maintenance of protein synthesis and viability during nitrogen starvation. Autophagy is required for proper vegetative growth, asexual/sexual reproduction, and full virulence. Autophagy is particularly involved in the biosynthesis of deoxynivalenol (DON), an important virulence determinant. In Gibberella zeae (strain ATCC MYA-4620 / CBS 123657 / FGSC 9075 / NRRL 31084 / PH-1) (Wheat head blight fungus), this protein is Autophagy-related protein 22.